We begin with the raw amino-acid sequence, 315 residues long: MEQISNIAGGDTTKETMASLGLICEKDIHEQRLKIDSFIASPFRRSMNSLVERAQATAQSQVELMNLKADLREAEDELVKVLAVKTRKEARQMGIRDSISATQSRIEVLRRNLQLQKSKKDDSVRIISQQLQALSKSKDNAGKVTEDKADIHEAISWYNHALGFHVEAGHGVKFTFTNIDAKRPTREFSFTVHYGNDIYTLLDSDLQLDYINEMVQELNKTNDLFRFVRLMREQFLKSTLSELPTHSGQLQQETSAISASAPAISFSTDTNMSTPENKRSKVQVNRRQKRGSESPLLAPVSTSATRRSSRFKGKK.

Position 1 is an N-acetylmethionine (Met1). Residues 57-91 adopt a coiled-coil conformation; sequence TAQSQVELMNLKADLREAEDELVKVLAVKTRKEAR. The disordered stretch occupies residues 261–315; it reads APAISFSTDTNMSTPENKRSKVQVNRRQKRGSESPLLAPVSTSATRRSSRFKGKK. Positions 266-275 are enriched in polar residues; the sequence is FSTDTNMSTP. A compositionally biased stretch (basic residues) spans 280-289; it reads SKVQVNRRQK.

Belongs to the SPC25 family. In terms of assembly, component of the NDC80 complex, which consists of NDC80, NUF2, SPC24 and SPC25.

It is found in the chromosome. The protein localises to the centromere. Its function is as follows. Acts as a component of the essential kinetochore-associated NDC80 complex, which is required for chromosome segregation and spindle checkpoint activity to ensure proper cell division. The polypeptide is Kinetochore protein SPC25 homolog (Arabidopsis thaliana (Mouse-ear cress)).